Reading from the N-terminus, the 418-residue chain is D-amino acid dehydrogenase (418 aa).

FAD is bound at residue 3 to 17; the sequence is VLVLGAGVVGTTSAW.

Belongs to the DadA oxidoreductase family. Requires FAD as cofactor.

It catalyses the reaction a D-alpha-amino acid + A + H2O = a 2-oxocarboxylate + AH2 + NH4(+). The protein operates within amino-acid degradation; D-alanine degradation; NH(3) and pyruvate from D-alanine: step 1/1. Oxidative deamination of D-amino acids. In Dechloromonas aromatica (strain RCB), this protein is D-amino acid dehydrogenase.